A 608-amino-acid chain; its full sequence is MLEIGSPNALFFRTNTTCNNLLRELQKIWVEIGETETEKDRMLMELERECLQIYQRKVDEAANSKAKLHQSVASIEAEVASLMAALGVLNINSPIKLDKGSKSLKEKLAAVTPLVEELRIQKEERMKQFSDIKAQIEKISGEISGYSDHLNKAMNISLTLEEQDLTLRNLNEYQTHLRTLQKEKSDRLNKVLGYVNEVHALCGVLGVDFSQTVSAVHPSLHRTDQEQSTNISDSTLEGLEHMIQKLKTERKSRFQKLKDVVASLFELWNLMDTPQEDRTKFGKVTYVVRSSEANITEPGILSTETIEQVSTEVDSLSKLKASRMKELVMKRRSELEDLCRLTHIQPDTSTSAEKSTALIDSGLVDPSELLANIEMQINKIKDEAQSRKDIMDRIDRWLSACEEENWLEEYNLDENRYSAGRGGHVNLKRAERARVTINKIPGMVDTLIKKTLVWEEDMQKSFLYDGVRLVNILEDYKLTRKQQEEEKKRYRDQKKRQDLLLTQRESIYGSKPSPRRSSSFRKPNGFNISNGNGSVPPTPRRGSVGTTTPDVLLTPRSYSGHHRQNGYFKEVRRLSTTPLNYVAMQKEDTVSTTYTSIYSSEPDSPLQG.

3 coiled-coil regions span residues 164–186, 368–388, and 467–503; these read DLTL…EKSD, ELLA…QSRK, and VRLV…LLTQ. The segment at 501–565 is disordered; the sequence is LTQRESIYGS…RSYSGHHRQN (65 aa). A compositionally biased stretch (low complexity) spans 510 to 523; sequence SKPSPRRSSSFRKP. Ser-513 bears the Phosphoserine mark. The span at 526-535 shows a compositional bias: polar residues; sequence FNISNGNGSV. At Ser-604 the chain carries Phosphoserine.

Belongs to the MAP65/ASE1 family. Forms a dimer. Binds to polymerized centrally located endocytic MT.

It localises to the nucleus. The protein localises to the cytoplasm. Its subcellular location is the mitochondrion. The protein resides in the cytoskeleton. It is found in the phragmoplast. Functionally, microtubule-associated protein that mediates the formation of a mesh-like stable and dense network formed by individual microtubules (MT). Confers MT resistance to high concentration of NaCl. This Arabidopsis thaliana (Mouse-ear cress) protein is 65-kDa microtubule-associated protein 6 (MAP65-6).